We begin with the raw amino-acid sequence, 157 residues long: Crossover junction endodeoxyribonuclease RuvC (157 aa).

Catalysis depends on residues aspartate 7, glutamate 67, and aspartate 140. Mg(2+) is bound by residues aspartate 7, glutamate 67, and aspartate 140.

Belongs to the RuvC family. Homodimer which binds Holliday junction (HJ) DNA. The HJ becomes 2-fold symmetrical on binding to RuvC with unstacked arms; it has a different conformation from HJ DNA in complex with RuvA. In the full resolvosome a probable DNA-RuvA(4)-RuvB(12)-RuvC(2) complex forms which resolves the HJ. Requires Mg(2+) as cofactor.

It localises to the cytoplasm. It catalyses the reaction Endonucleolytic cleavage at a junction such as a reciprocal single-stranded crossover between two homologous DNA duplexes (Holliday junction).. The RuvA-RuvB-RuvC complex processes Holliday junction (HJ) DNA during genetic recombination and DNA repair. Endonuclease that resolves HJ intermediates. Cleaves cruciform DNA by making single-stranded nicks across the HJ at symmetrical positions within the homologous arms, yielding a 5'-phosphate and a 3'-hydroxyl group; requires a central core of homology in the junction. The consensus cleavage sequence is 5'-(A/T)TT(C/G)-3'. Cleavage occurs on the 3'-side of the TT dinucleotide at the point of strand exchange. HJ branch migration catalyzed by RuvA-RuvB allows RuvC to scan DNA until it finds its consensus sequence, where it cleaves and resolves the cruciform DNA. In Thermosipho melanesiensis (strain DSM 12029 / CIP 104789 / BI429), this protein is Crossover junction endodeoxyribonuclease RuvC.